The primary structure comprises 439 residues: Elongation factor Tu, mitochondrial (439 aa).

The tr-type G domain occupies 51 to 246 (KPHVNIGTIG…AVDSYITLPE (196 aa)). The G1 stretch occupies residues 60 to 67 (GHVDHGKT). Residue 60 to 67 (GHVDHGKT) participates in GTP binding. A G2 region spans residues 101-105 (GITIS). Residues 122-125 (DCPG) are G3. GTP contacts are provided by residues 122–126 (DCPGH) and 177–180 (NKVD). The G4 stretch occupies residues 177–180 (NKVD). The interval 214–216 (SAL) is G5.

This sequence belongs to the TRAFAC class translation factor GTPase superfamily. Classic translation factor GTPase family. EF-Tu/EF-1A subfamily.

It is found in the mitochondrion. Functionally, this protein promotes the GTP-dependent binding of aminoacyl-tRNA to the A-site of ribosomes during protein biosynthesis. This Schizosaccharomyces pombe (strain 972 / ATCC 24843) (Fission yeast) protein is Elongation factor Tu, mitochondrial (tuf1).